The following is a 243-amino-acid chain: High affinity immunoglobulin epsilon receptor subunit beta (243 aa).

The disordered stretch occupies residues Met-1–Gln-48. At Met-1 to Glu-59 the chain is on the cytoplasmic side. A helical transmembrane segment spans residues Phe-60–Val-79. The Extracellular portion of the chain corresponds to Cys-80 to Arg-97. A helical transmembrane segment spans residues Ala-98 to Met-117. Over Ser-118–Ser-130 the chain is Cytoplasmic. A helical membrane pass occupies residues Leu-131–Leu-150. Topologically, residues Asn-151–Glu-179 are extracellular. The chain crosses the membrane as a helical span at residues Leu-180 to Ile-199. Residues Ile-200–Ser-243 lie on the Cytoplasmic side of the membrane. Phosphotyrosine is present on residues Tyr-218 and Tyr-224. Ser-225 is modified (phosphoserine). At Tyr-228 the chain carries Phosphotyrosine.

This sequence belongs to the MS4A family. In terms of assembly, tetramer of an alpha chain, a beta chain, and two disulfide linked gamma chains. Binds LILRB1. Interacts with FES/FPS and LYN. Interacts with FGR. Post-translationally, phosphorylated on tyrosine residues by LYN.

It localises to the membrane. High affinity receptor that binds to the Fc region of immunoglobulins epsilon. Aggregation of FCER1 by multivalent antigens is required for the full mast cell response, including the release of preformed mediators (such as histamine) by degranulation and de novo production of lipid mediators and cytokines. Also mediates the secretion of important lymphokines. Binding of allergen to receptor-bound IgE leads to cell activation and the release of mediators responsible for the manifestations of allergy. The protein is High affinity immunoglobulin epsilon receptor subunit beta (Ms4a2) of Rattus norvegicus (Rat).